Reading from the N-terminus, the 427-residue chain is Septin-6 (427 aa).

Ala-2 carries the post-translational modification N-acetylalanine. A Phosphoserine modification is found at Ser-27. The Septin-type G domain maps to 39 to 305 (QGFCFNILCV…ELYRRCKLEE (267 aa)). Positions 49 to 56 (GETGLGKS) are G1 motif. Residues 49–56 (GETGLGKS), Gly-104, 185–193 (KSDAISKSE), Gly-239, and Arg-254 each bind GTP. The tract at residues 101 to 104 (STVG) is G3 motif. The tract at residues 184–187 (AKSD) is G4 motif. The stretch at 321–416 (QETYEAKRNE…QSQGSQAGGS (96 aa)) forms a coiled coil. Residue Lys-367 is modified to N6-acetyllysine. The segment at 405–427 (LLQSQGSQAGGSQTLKRDKEKKN) is disordered. Positions 407-417 (QSQGSQAGGSQ) are enriched in low complexity. A Phosphoserine modification is found at Ser-416. A Phosphothreonine modification is found at Thr-418.

It belongs to the TRAFAC class TrmE-Era-EngA-EngB-Septin-like GTPase superfamily. Septin GTPase family. Septins polymerize into heterooligomeric protein complexes that form filaments, and associate with cellular membranes, actin filaments and microtubules. GTPase activity is required for filament formation. Filaments are assembled from asymmetrical heterotrimers, composed of SEPTIN2, SEPTIN6 and SEPTIN7 that associate head-to-head to form a hexameric unit. Within the trimer, directly interacts with SEPTIN2 and SEPTIN7. Also interacts with SEPTIN9 and SEPTIN12. Interaction with SEPTIN12 alters filament structure. Component of a septin core octameric complex consisting of SEPTIN12, SEPTIN7, SEPTIN6 and SEPTIN2 or SEPTIN4 in the order 12-7-6-2-2-6-7-12 or 12-7-6-4-4-6-7-12 and located in the sperm annulus. Interacts with SOCS7. Interacts with HNRNPA1.

Its subcellular location is the cytoplasm. The protein resides in the cytoskeleton. It is found in the spindle. The protein localises to the chromosome. It localises to the centromere. Its subcellular location is the kinetochore. The protein resides in the cleavage furrow. It is found in the midbody. The protein localises to the cell projection. It localises to the cilium. Its subcellular location is the flagellum. Its function is as follows. Filament-forming cytoskeletal GTPase. Required for normal organization of the actin cytoskeleton. Involved in cytokinesis. Forms a filamentous structure with SEPTIN12, SEPTIN6, SEPTIN2 and probably SEPTIN4 at the sperm annulus which is required for the structural integrity and motility of the sperm tail during postmeiotic differentiation. This chain is Septin-6, found in Bos taurus (Bovine).